The sequence spans 1124 residues: MEGWGEISRIAATASSSVIDNSKITSLQFDNQQNLLWCGDSKGTTRSFTPQSTSIPMPYPALHLSQYSKFKTSLGTSPVKQYLNHQKGILSLSHNCVNFNNRRGLTQLSLNSESLKEPGFNNLSCMTFNSNTNNDLVIAGDSLFKVDLLKPNMTTSFNHTGKVSMIDNTLNYLTLGKSNGEIEIFDPVSNQTVKSFYGHNGLLSDIDVQGNYVASCGYSLRPRRNQASQSSYMIDPLVNIYDLRMMRSLPPIPFSAGASFVKFHPKLPNIMIIASSLGQLQFVDIYDQSNVYLYQADLSNVNASTPTTSSNTYLANLEVSGNGEFITFSDGFQNLHLWSFKNNNSKNFINFPSYLEQPDFSPPFQQNHINVDDVVPLSSIGMPYYKDLLLSNYASDLHFTKELSKLPNHLDPELLQNQYSQVLPYNTLKYGKRNLNKFYVPLQNNVSTKQKLFPKFISEKNGHDSFDNENSNIFEYKLSNKFEVPNCYSNLKIQYSKFGVEDFDFSFYNRTKYSGLENHLDNSYINSLLQLYKYSPVFQNFIIKHLLKEWLPNDLTTIIQNGNPQGSSILNELGYIFDMMNKSHGKNCKTSNFSNVLSQNQVAQMQELINKDDCKNLNAFEIRAIIGKFNKFLLSTCNNDLLNQFNTSLSEITNIGYEIEIKSNGCNINNVNYNSQLTVDLMSPPINKLSILISANSTSATKKNLNILNYLDYSMNQFKTIKCQQCNNSFPHLLEIRQSLVHLPPVISINVNFTGQEFNLIQNFPNWLVPEFYTYGMNNKVSFKLHSNDNLSNKYELLGYVCEINVGSEFLKGKHNLVSYIKIESKWYLFNDFLVMPIPESEVFDLSYHWKKPIIVMYQLANHADFGSFQQQSFAQLPDLNDSILYRDHFAGGIRDSIKREYELLTKDEAPNAGTLIAIDAEFVALNPEELEVHYGGVRNLIKPRNLSLARISVLRGDNGPKQGVPFIDDYIIHTCFIDDYLTSFSGIEPGDLDPSSSTKTLTTLQTSYRKLWLLLNLGCIFVGHGLQNDFRCINLHVPKNQIRDTADFFYLPELKRKLSLKFLAYILLKEKVQTGNHDSIEDANTALLLYKKYLELTAIGEFESTLHRIYMDGQQLRFRVPDS.

WD repeat units lie at residues 19–58 (IDNS…IPMP), 118–157 (PGFN…TTSF), 158–195 (NHTG…TVKS), and 309–348 (SSNT…SKNF). The segment at 351-484 (FPSYLEQPDF…EYKLSNKFEV (134 aa)) is linker. In terms of domain architecture, USP spans 484–861 (VPNCYSNLKI…KPIIVMYQLA (378 aa)). The Exonuclease domain occupies 917–1091 (IAIDAEFVAL…EDANTALLLY (175 aa)). A divalent metal cation is bound by residues aspartate 920, glutamate 922, aspartate 1030, and aspartate 1083.

It belongs to the peptidase C19 family. PAN2 subfamily. In terms of assembly, forms a heterotrimer with an asymmetric homodimer of the regulatory subunit PAN3 to form the poly(A)-nuclease (PAN) deadenylation complex. Requires a divalent metal cation as cofactor.

It localises to the cytoplasm. The catalysed reaction is Exonucleolytic cleavage of poly(A) to 5'-AMP.. Positively regulated by the regulatory subunit PAN3. Its function is as follows. Catalytic subunit of the poly(A)-nuclease (PAN) deadenylation complex, one of two cytoplasmic mRNA deadenylases involved in mRNA turnover. PAN specifically shortens poly(A) tails of RNA and the activity is stimulated by poly(A)-binding protein PAB1. PAN deadenylation is followed by rapid degradation of the shortened mRNA tails by the CCR4-NOT complex. Deadenylated mRNAs are then degraded by two alternative mechanisms, namely exosome-mediated 3'-5' exonucleolytic degradation, or deadenylation-dependent mRNA decaping and subsequent 5'-3' exonucleolytic degradation by XRN1. May also be involved in post-transcriptional maturation of mRNA poly(A) tails. The polypeptide is PAN2-PAN3 deadenylation complex catalytic subunit PAN2 (Debaryomyces hansenii (strain ATCC 36239 / CBS 767 / BCRC 21394 / JCM 1990 / NBRC 0083 / IGC 2968) (Yeast)).